A 483-amino-acid polypeptide reads, in one-letter code: MNCQNKILNSVTVVYGYSSGDFSWKNNDDRKIFRTSGLIASIEGKKYVVTTREQMISCKTLIMYHLFKKNGVLVKSYMHILFQSIENNLIILGSVGYNELILDKDNAVSTTLNQKEIEIILNKFKGTNLDSHQTIPTNRSLYHINKIDLGNTFDNIKYKYHTYDIKFNKQCIFDKSYLPKSLKYKFICQKNINSVGTLGTVVYSAKNKIIGITTHVGTNKIYVTPTTVIISMMRNFIDYFNDQQSYKGQSCFPFKLKIDESNNIIITMQKNKSNKKVPVKNGDMLRTLNGYEIIVNDNEACLCVDSKNIIPLDIYFRMKYQKDASYELTVSRGSKIVKFNLFLVSNTSELRLTDQTYYFPKDTIPHINLFGLIVVKLSHELIDYLVKNGIIVRNYVIENIMNGAELNDDILIILDSTNELNCTTFNFPILTKQTKPIDCPVLTSLNHQKISNLENLSNVKLFTKGENILTLKLNQDSEIDLLV.

This is an uncharacterized protein from Acanthamoeba polyphaga mimivirus (APMV).